A 562-amino-acid chain; its full sequence is Glucose-6-phosphate isomerase (562 aa).

Glu370 functions as the Proton donor in the catalytic mechanism. Catalysis depends on residues His401 and Lys526.

Belongs to the GPI family.

It is found in the cytoplasm. It catalyses the reaction alpha-D-glucose 6-phosphate = beta-D-fructose 6-phosphate. Its pathway is carbohydrate biosynthesis; gluconeogenesis. It functions in the pathway carbohydrate degradation; glycolysis; D-glyceraldehyde 3-phosphate and glycerone phosphate from D-glucose: step 2/4. Its function is as follows. Catalyzes the reversible isomerization of glucose-6-phosphate to fructose-6-phosphate. This is Glucose-6-phosphate isomerase from Deinococcus geothermalis (strain DSM 11300 / CIP 105573 / AG-3a).